Here is a 393-residue protein sequence, read N- to C-terminus: MKFTLISSCIAIAALAVAVDAAPGEKKISIPLAKNPNYKPSAKNAIQKAIAKYNKHKINTSTGGIVPDAGVGTVPMTDYGNDVEYYGQVTIGTPGKKFNLDFDTGSSDLWIASTLCTNCGSRQTKYDPKQSSTYQADGRTWSISYGDGSSASGILAKDNVNLGGLLIKGQTIELAKREAASFANGPNDGLLGLGFDTITTVRGVKTPMDNLISQGLISRPIFGVYLGKASNGGGGEYIFGGYDSTKFKGSLTTVPIDNSRGWWGITVDRATVGTSTVASSFDGILDTGTTLLILPNNVAASVARAYGASDNGDGTYTISCDTSRFKPLVFSINGASFQVSPDSLVFEEYQGQCIAGFGYGNFDFAIIGDTFLKNNYVVFNQGVPEVQIAPVAQ.

A signal peptide spans 1 to 21 (MKFTLISSCIAIAALAVAVDA). The propeptide at 22–68 (APGEKKISIPLAKNPNYKPSAKNAIQKAIAKYNKHKINTSTGGIVPD) is activation peptide. The 305-residue stretch at 85–389 (YYGQVTIGTP…NQGVPEVQIA (305 aa)) folds into the Peptidase A1 domain. Aspartate 103 is an active-site residue. Cysteines 116 and 119 form a disulfide. Residue aspartate 286 is part of the active site. Cysteine 320 and cysteine 353 are joined by a disulfide.

It belongs to the peptidase A1 family.

The catalysed reaction is Hydrolysis of proteins with broad specificity similar to that of pepsin A, preferring hydrophobic residues at P1 and P1'. Clots milk and activates trypsinogen. Does not cleave 4-Gln-|-His-5, but does cleave 10-His-|-Leu-11 and 12-Val-|-Glu-13 in B chain of insulin.. This Rhizopus chinensis (Bread mold) protein is Rhizopuspepsin.